The following is a 306-amino-acid chain: Putative secretory carrier-associated membrane protein 1 (306 aa).

A disordered region spans residues 1–60 (MAGRYDSNPFEEDDVNPFSEQARGKAGGQPSYGGGAFYMPNPRNVPSMSSNSRLSPLPPE). The Cytoplasmic segment spans residues 1 to 141 (MAGRYDSNPF…EIPSHLQRMQ (141 aa)). Gly residues predominate over residues 25-36 (KAGGQPSYGGGA). Residues 44-54 (NVPSMSSNSRL) show a composition bias toward polar residues. Positions 72–109 (LDSSKDLKNREKELQAREAELNKREKELKRREEAAARA) form a coiled coil. The next 4 helical transmembrane spans lie at 142-162 (YVAFASFLGLACCLFWNVIAV), 174-194 (IWLLAIIYFISGVPGAYVLWY), 209-229 (FGLFFLVYLFHILFCVFSAVA), and 257-277 (IFYFVGFGLFCVESLLSIWVI). Topologically, residues 278-306 (QQVYMYFRGSGKAAEMKRDATRGAMRAAF) are cytoplasmic.

Belongs to the SCAMP family.

The protein localises to the cell membrane. The protein resides in the cytoplasmic vesicle. It localises to the secretory vesicle membrane. Probably involved in membrane trafficking. The chain is Putative secretory carrier-associated membrane protein 1 (SCAMP1) from Oryza sativa subsp. indica (Rice).